We begin with the raw amino-acid sequence, 495 residues long: Acyltransferase abl6 (495 aa).

Residue histidine 171 is the Proton acceptor of the active site.

The protein belongs to the plant acyltransferase family.

Functionally, acyltransferase; part of the gene cluster that mediates the biosynthesis of abscisic acid (ABA), a phytohormone that acts antagonistically toward salicylic acid (SA), jasmonic acid (JA) and ethylene (ETH) signaling, to impede plant defense responses. The first step of the pathway catalyzes the reaction from farnesyl diphosphate to alpha-ionylideneethane performed by the alpha-ionylideneethane synthase abl3 via a three-step reaction mechanism involving 2 neutral intermediates, beta-farnesene and allofarnesene. The cytochrome P450 monooxygenase abl1 might then be involved in the conversion of alpha-ionylideneethane to alpha-ionylideneacetic acid. Alpha-ionylideneacetic acid is further converted to abscisic acid in 2 steps involving the cytochrome P450 monooxygenase abl2 and the short-chain dehydrogenase/reductase abl4, via the intermediates 1'-deoxy-ABA or 1',4'-trans-diol-ABA, depending on the order of action of these 2 enzymes. Abl2 is responsible for the hydroxylation of carbon atom C-1' and abl4 might be involved in the oxidation of the C-4' carbon atom. The acyltransferase abl6 seems not essential for the biosynthesis of ABA, but it may acetylate ABA as part of the synthesis of another ABA-related molecule. The protein is Acyltransferase abl6 of Leptosphaeria maculans (strain JN3 / isolate v23.1.3 / race Av1-4-5-6-7-8) (Blackleg fungus).